The primary structure comprises 65 residues: Large ribosomal subunit protein bL35 (65 aa).

Basic residues-rich tracts occupy residues methionine 1–alanine 11 and lysine 21–arginine 43. Residues methionine 1–glycine 65 form a disordered region.

Belongs to the bacterial ribosomal protein bL35 family.

The chain is Large ribosomal subunit protein bL35 from Desulfovibrio desulfuricans (strain ATCC 27774 / DSM 6949 / MB).